Consider the following 195-residue polypeptide: Protein GrpE (195 aa).

Belongs to the GrpE family. As to quaternary structure, homodimer.

It is found in the cytoplasm. Participates actively in the response to hyperosmotic and heat shock by preventing the aggregation of stress-denatured proteins, in association with DnaK and GrpE. It is the nucleotide exchange factor for DnaK and may function as a thermosensor. Unfolded proteins bind initially to DnaJ; upon interaction with the DnaJ-bound protein, DnaK hydrolyzes its bound ATP, resulting in the formation of a stable complex. GrpE releases ADP from DnaK; ATP binding to DnaK triggers the release of the substrate protein, thus completing the reaction cycle. Several rounds of ATP-dependent interactions between DnaJ, DnaK and GrpE are required for fully efficient folding. The polypeptide is Protein GrpE (Francisella tularensis subsp. holarctica (strain FTNF002-00 / FTA)).